The primary structure comprises 646 residues: Interferon-induced GTP-binding protein MxA (646 aa).

The Dynamin-type G domain occupies 34-307 (DLALPAIAVI…LVHHIQKSLP (274 aa)). The segment at 44 to 51 (GDQSSGKS) is G1 motif. GTP is bound at residue 44–51 (GDQSSGKS). The interval 69-71 (VTR) is G2 motif. Residues 145–148 (DLPG) form a G3 motif region. GTP-binding positions include 145–149 (DLPGI) and 214–217 (TKPD). The tract at residues 214–217 (TKPD) is G4 motif. A G5 motif region spans residues 246 to 249 (RCRG). The GED domain maps to 546–637 (LREMRLHLKS…PLGHLLEVTF (92 aa)).

Belongs to the TRAFAC class dynamin-like GTPase superfamily. Dynamin/Fzo/YdjA family.

The protein localises to the cytoplasm. This is Interferon-induced GTP-binding protein MxA (mxa) from Danio rerio (Zebrafish).